The chain runs to 199 residues: N-(5'-phosphoribosyl)anthranilate isomerase (199 aa).

The protein belongs to the TrpF family.

It carries out the reaction N-(5-phospho-beta-D-ribosyl)anthranilate = 1-(2-carboxyphenylamino)-1-deoxy-D-ribulose 5-phosphate. It functions in the pathway amino-acid biosynthesis; L-tryptophan biosynthesis; L-tryptophan from chorismate: step 3/5. The protein is N-(5'-phosphoribosyl)anthranilate isomerase of Lacticaseibacillus paracasei (strain ATCC 334 / BCRC 17002 / CCUG 31169 / CIP 107868 / KCTC 3260 / NRRL B-441) (Lactobacillus paracasei).